Reading from the N-terminus, the 60-residue chain is WQPPWYCKEPVRIGSCKKQFSSFYFKWTAKKCLPFLFSGCGGNANRFQTIGECRKKCLGK.

The region spanning 7–57 is the BPTI/Kunitz inhibitor domain; that stretch reads CKEPVRIGSCKKQFSSFYFKWTAKKCLPFLFSGCGGNANRFQTIGECRKKC. 3 disulfides stabilise this stretch: cysteine 7-cysteine 57, cysteine 16-cysteine 40, and cysteine 32-cysteine 53.

Belongs to the venom Kunitz-type family. In terms of tissue distribution, expressed by the venom gland.

The protein localises to the secreted. In terms of biological role, potent blocker of high-voltage-activated calcium ion channels in the nanomolar range, particularly the L-type channels in cerebellar granule cells. The sensitivity of L-, N- and P-type channels to CAC is tissue and species-dependent. Blocks the L-type current of cardiac cells, depressing cardiac contractility. The protein is Kunitz-type serine protease inhibitor homolog calcicludine of Dendroaspis angusticeps (Eastern green mamba).